The primary structure comprises 153 residues: Lysine-acyltransferase RtxC (153 aa).

His-32 is a catalytic residue.

This sequence belongs to the RTX toxin acyltransferase family.

It localises to the cytoplasm. The catalysed reaction is a fatty acyl-[ACP] + L-lysyl-[protein] = N(6)-(fatty acyl)-L-lysyl-[protein] + holo-[ACP] + H(+). In terms of biological role, catalyzes fatty acylation of the protoxin (RtxA) at internal lysine residues, thereby converting it to the active toxin. The protein is Lysine-acyltransferase RtxC (rtxC) of Vibrio cholerae serotype O1 (strain ATCC 39315 / El Tor Inaba N16961).